A 738-amino-acid polypeptide reads, in one-letter code: MTNQYEAVGLKAKEYEGIVEMLGREPNELELNLYGVMWSEHCSYKHSRSMFKHFPTSGPSVLQGPGENAGIVDIGDGLAIAMKIESHNHPSAIEPYQGAATGVGGIIRDIFAMGARPIALLNSLRFGELEGDARVKYLLEGVVEGIAGYGNCMGIPTVGGEVYFNQSYRGNPLVNAMCVGLIEHDAIHRGTASGVGNSIMYVGAATGRDGIGGASFASATLTEESEEKRAAVQVGDPFMEKLLLEACLELLKTGSIIGIQDLGAAGLVSACCETATRGEGGMEIDVLKVPRRETGMVPVEVMISESQERMLLIVERGREEEVNEIVKKWGLHSVIIGRVTNDDKLRIFEGDKVVGEIPAESLDSSGAPRYEPDYAPPADLAELQKLDIESIPEPRDLSSTLRKLLASPNIASKEWIYRQYDHMVRTNTVIKPGSDAAVLRIRGTKKGIALTTDCNSRYCYLDPREGSKIAVVEAARNIVCSGGKPIAITDGLNFGSPETPEGYWQFRESVLGLSEACREMDTPVISGNVSFYNQTEKGSIHPTPIVGMVGLIEDISKTCTMAFKEAGDIIVLLGQTKAEIGGSEYLASIHGQEKGKIPHLNLSLEKRLQKEVLALIQGDLVQSAHDLSEGGLAVGVAECAIAGGIGARVEVNTELRNDIVLFSESQSRFLMTIKPEHLETVQERLKQSNIPHEQLGTVIGNELQMQINGNVVVKESIGELEEIWRGALQCLMESMKID.

Histidine 41 is a catalytic residue. Residues tyrosine 44 and lysine 83 each contribute to the ATP site. A Mg(2+)-binding site is contributed by glutamate 85. Substrate is bound by residues 86 to 89 and arginine 108; that span reads SHNH. The active-site Proton acceptor is the histidine 87. Aspartate 109 serves as a coordination point for Mg(2+). Glutamine 233 lines the substrate pocket. Aspartate 261 lines the Mg(2+) pocket. Residue 305-307 participates in substrate binding; that stretch reads ESQ. ATP-binding residues include aspartate 490 and glycine 527. Asparagine 528 is a Mg(2+) binding site. Residue serine 530 coordinates substrate.

It belongs to the FGAMS family. As to quaternary structure, monomer. Part of the FGAM synthase complex composed of 1 PurL, 1 PurQ and 2 PurS subunits.

It localises to the cytoplasm. The enzyme catalyses N(2)-formyl-N(1)-(5-phospho-beta-D-ribosyl)glycinamide + L-glutamine + ATP + H2O = 2-formamido-N(1)-(5-O-phospho-beta-D-ribosyl)acetamidine + L-glutamate + ADP + phosphate + H(+). It functions in the pathway purine metabolism; IMP biosynthesis via de novo pathway; 5-amino-1-(5-phospho-D-ribosyl)imidazole from N(2)-formyl-N(1)-(5-phospho-D-ribosyl)glycinamide: step 1/2. Part of the phosphoribosylformylglycinamidine synthase complex involved in the purines biosynthetic pathway. Catalyzes the ATP-dependent conversion of formylglycinamide ribonucleotide (FGAR) and glutamine to yield formylglycinamidine ribonucleotide (FGAM) and glutamate. The FGAM synthase complex is composed of three subunits. PurQ produces an ammonia molecule by converting glutamine to glutamate. PurL transfers the ammonia molecule to FGAR to form FGAM in an ATP-dependent manner. PurS interacts with PurQ and PurL and is thought to assist in the transfer of the ammonia molecule from PurQ to PurL. In Alkaliphilus metalliredigens (strain QYMF), this protein is Phosphoribosylformylglycinamidine synthase subunit PurL.